A 398-amino-acid polypeptide reads, in one-letter code: Nematocin receptor 2 (398 aa).

At 1–25 the chain is on the extracellular side; it reads MNNNTLNITNQRTAAAMSQIYFLVV. N-linked (GlcNAc...) asparagine glycosylation is found at Asn-3 and Asn-7. A helical transmembrane segment spans residues 26–46; that stretch reads YQTAVMIVSLLGNLFLLFVIF. Residues 47 to 58 are Cytoplasmic-facing; that stretch reads RANQVMKRRVSP. The chain crosses the membrane as a helical span at residues 59–79; the sequence is VQLLIIHTCVADLLFALLSLG. Residues 80 to 99 are Extracellular-facing; it reads TEILTLRTYPQYYGSNFVCK. Residues Cys-98 and Cys-173 are joined by a disulfide bond. A helical membrane pass occupies residues 100-120; sequence LMRYVQMFPMYASPFLLVAIS. Topologically, residues 121–143 are cytoplasmic; the sequence is ADRYQAICRPLAHFRSSRYRRPN. Residues 144–164 traverse the membrane as a helical segment; the sequence is WMAAIAWGLALVLSIPQFFVW. Residues 165–187 lie on the Extracellular side of the membrane; the sequence is TKHSKTGRCSTIYGQNKNTVKIT. Residues 188–208 traverse the membrane as a helical segment; the sequence is YVIMFNTLAWLLPSILAAVFY. Residues 209 to 271 are Cytoplasmic-facing; it reads YCVCKAVRLS…DRKRVQTVRL (63 aa). The chain crosses the membrane as a helical span at residues 272-292; that stretch reads TITIVACNFFLWMPFCLINVI. Over 293 to 302 the chain is Extracellular; sequence QALWPEISHI. Residues 303 to 325 traverse the membrane as a helical segment; the sequence is MFINYVAILGNLNSCLNPWIYIL. Residues 326–398 lie on the Cytoplasmic side of the membrane; that stretch reads FNRSHVRKAL…DSTSLKTNSN (73 aa).

It belongs to the G-protein coupled receptor 1 family. Vasopressin/oxytocin receptor subfamily. In terms of tissue distribution, detected in the ADL sensory neurons, the RMED and RMEV motor neurons, and the PQR tail neuron. In males, detected in SPC tail neurons involved in spicule penetration and sperm transfer, and male-specific oblique muscles involved in vulval contact.

It is found in the cell membrane. Its function is as follows. Not directly activated by nematocin. May modulate activity of the nematocin receptor ntr-1, leading to reduced intracellular cAMP production. Plays a role in male mating behavior. This chain is Nematocin receptor 2, found in Caenorhabditis elegans.